A 196-amino-acid polypeptide reads, in one-letter code: ATP-dependent Clp protease proteolytic subunit (196 aa).

Catalysis depends on Ser-101, which acts as the Nucleophile. His-126 is an active-site residue.

This sequence belongs to the peptidase S14 family. Component of the chloroplastic Clp protease core complex.

The protein localises to the plastid. It localises to the chloroplast stroma. It catalyses the reaction Hydrolysis of proteins to small peptides in the presence of ATP and magnesium. alpha-casein is the usual test substrate. In the absence of ATP, only oligopeptides shorter than five residues are hydrolyzed (such as succinyl-Leu-Tyr-|-NHMec, and Leu-Tyr-Leu-|-Tyr-Trp, in which cleavage of the -Tyr-|-Leu- and -Tyr-|-Trp bonds also occurs).. Cleaves peptides in various proteins in a process that requires ATP hydrolysis. Has a chymotrypsin-like activity. Plays a major role in the degradation of misfolded proteins. In Gossypium hirsutum (Upland cotton), this protein is ATP-dependent Clp protease proteolytic subunit.